Here is a 300-residue protein sequence, read N- to C-terminus: Histone deacetylase HDT3 (300 aa).

The span at 98-112 (EDEMDLDSEDEDEEL) shows a compositional bias: acidic residues. The disordered stretch occupies residues 98 to 300 (EDEMDLDSED…AHSKAKHGGK (203 aa)). Positions 119–132 (ENGKADEKKQKSQE) are enriched in basic and acidic residues. Residues 151–197 (DDDSDEDETDDSDEDETDDSDEGLSPEEGDDDSSDEDDTSDDEEEDT) show a composition bias toward acidic residues. Over residues 198–211 (PTPKKPEVGKKRAA) the composition is skewed to basic and acidic residues. Positions 265-275 (SPKSAPKSGVP) are enriched in low complexity. Residues 274–297 (VPCKSCSKSFISETAPQAHSKAKH) form a C2H2-type zinc finger. A compositionally biased stretch (polar residues) spans 279–290 (CSKSFISETAPQ).

Belongs to the histone deacetylase HD2 family. As to quaternary structure, multimer. Possibly forms a homotrimer with HDT1 and/or HDT2.

It localises to the nucleus. The protein localises to the nucleolus. In terms of biological role, mediates the deacetylation of lysine residues on the N-terminal part of the core histones (H2A, H2B, H3 and H4). Histone deacetylation gives a tag for epigenetic repression and plays an important role in transcriptional regulation, cell cycle progression and developmental events. In Zea mays (Maize), this protein is Histone deacetylase HDT3 (HDT3).